Consider the following 154-residue polypeptide: 6,7-dimethyl-8-ribityllumazine synthase (154 aa).

5-amino-6-(D-ribitylamino)uracil contacts are provided by residues phenylalanine 22, serine 56–glutamate 58, and valine 81–isoleucine 83. A (2S)-2-hydroxy-3-oxobutyl phosphate-binding site is contributed by glutamate 86–threonine 87. Histidine 89 acts as the Proton donor in catalysis. Position 114 (phenylalanine 114) interacts with 5-amino-6-(D-ribitylamino)uracil. Position 128 (arginine 128) interacts with (2S)-2-hydroxy-3-oxobutyl phosphate.

It belongs to the DMRL synthase family.

It carries out the reaction (2S)-2-hydroxy-3-oxobutyl phosphate + 5-amino-6-(D-ribitylamino)uracil = 6,7-dimethyl-8-(1-D-ribityl)lumazine + phosphate + 2 H2O + H(+). It functions in the pathway cofactor biosynthesis; riboflavin biosynthesis; riboflavin from 2-hydroxy-3-oxobutyl phosphate and 5-amino-6-(D-ribitylamino)uracil: step 1/2. Catalyzes the formation of 6,7-dimethyl-8-ribityllumazine by condensation of 5-amino-6-(D-ribitylamino)uracil with 3,4-dihydroxy-2-butanone 4-phosphate. This is the penultimate step in the biosynthesis of riboflavin. The protein is 6,7-dimethyl-8-ribityllumazine synthase of Chlamydia caviae (strain ATCC VR-813 / DSM 19441 / 03DC25 / GPIC) (Chlamydophila caviae).